Reading from the N-terminus, the 386-residue chain is Succinate--CoA ligase [ADP-forming] subunit beta (386 aa).

The ATP-grasp domain occupies 9–244; the sequence is KELLRKYGVV…FDEEDADEIE (236 aa). ATP-binding positions include lysine 46, 53–55, glutamate 99, alanine 102, and glutamate 107; that span reads GRG. The Mg(2+) site is built by asparagine 199 and aspartate 213. Substrate is bound by residues asparagine 264 and 321–323; that span reads GIM.

It belongs to the succinate/malate CoA ligase beta subunit family. As to quaternary structure, heterotetramer of two alpha and two beta subunits. It depends on Mg(2+) as a cofactor.

It catalyses the reaction succinate + ATP + CoA = succinyl-CoA + ADP + phosphate. The enzyme catalyses GTP + succinate + CoA = succinyl-CoA + GDP + phosphate. Its pathway is carbohydrate metabolism; tricarboxylic acid cycle; succinate from succinyl-CoA (ligase route): step 1/1. Succinyl-CoA synthetase functions in the citric acid cycle (TCA), coupling the hydrolysis of succinyl-CoA to the synthesis of either ATP or GTP and thus represents the only step of substrate-level phosphorylation in the TCA. The beta subunit provides nucleotide specificity of the enzyme and binds the substrate succinate, while the binding sites for coenzyme A and phosphate are found in the alpha subunit. The sequence is that of Succinate--CoA ligase [ADP-forming] subunit beta from Aromatoleum aromaticum (strain DSM 19018 / LMG 30748 / EbN1) (Azoarcus sp. (strain EbN1)).